The chain runs to 2131 residues: Nonribosomal peptide synthetase criC (2131 aa).

Residues 13 to 407 (FSQQCFQHPD…GRRDRVTKIR (395 aa)) form an adenylation 1 region. A Carrier 1 domain is found at 525 to 601 (SGPLTIDQTI…ALVEKNRHET (77 aa)). Serine 562 is subject to O-(pantetheine 4'-phosphoryl)serine. Residues 598–627 (RHETENRPDSSAFATRTPEESSMPTQGPVT) form a disordered region. Positions 625-1018 (PVTPLQKRMV…YMSLLDAFLD (394 aa)) are condensation 1. An adenylation 2 region spans residues 1069 to 1447 (ASLHPTHIAV…GRKDRQVKVR (379 aa)). The Carrier 2 domain maps to 1569–1647 (SSEAHLEKLI…DLITLVAQQQ (79 aa)). Position 1607 is an O-(pantetheine 4'-phosphoryl)serine (serine 1607). The segment at 1688–2086 (SQSQSTFNVP…EALLLECFRM (399 aa)) is condensation 2.

It belongs to the NRP synthetase family. It depends on pantetheine 4'-phosphate as a cofactor.

The enzyme catalyses L-tryptophan + L-alanine + 2 ATP = cyclo(L-tryptophyl-L-alanyl) + 2 ADP + 2 phosphate + 2 H(+). Its pathway is secondary metabolite biosynthesis. It participates in alkaloid biosynthesis. Nonribosomal peptide synthetase; part of the gene cluster that mediates the biosynthesis of echinulin family alkaloid. The pathway begins with the biosynthesis of the cyclic dipeptide cyclo-L-Trp-L-Ala (cyclo-TA) by the NRPS criC via condensation of L-alanine and L-tryptophan. The prenyltransferase criA then catalyzes the first prenylation step, a reverse prenylation reaction at C2, to yield preechinulin. Preechinulin is the substrate of the cytochrome P450 monooxygenase criE that catalyzes the formation of the double bond between C10 and C11 to produce neoechulin A. The unique prenyltransferase criF functions as a competitive enzyme with criE for preechinulin metabolization and uses preechinulin for effective regiospecific prenylations. Preechinulin is prenylated by criF at C5 or C7. C7-prenylation leads to accumulation of tardioxopiperazine B without further modification by criF. In contrast, the C5-prenylated tardioxopiperazine A can be prenylated again by criF, predominantly at C7 to form echinulin or less frequently at C4 to give variecolorin L. CriF also accepts neoechilunin A to produce varlecolorin G (prenylation at C5) or isoechinulin A (prenylation at C7). CriF further converts isoechinulin A into dehydroechinulin. Moreover, a yet unidentified enzyme can also convert neoechilunin A into neoechilunin B by introducing a double bond between positions C14 and C17 and thus provides a further substrate to criF for C5 and C7 prenylation. The protein is Nonribosomal peptide synthetase criC of Aspergillus cristatus (Chinese Fuzhuan brick tea-fermentation fungus).